The following is a 266-amino-acid chain: Potassium/proton antiporter CemA (266 aa).

3 consecutive transmembrane segments (helical) span residues 46–66 (VIVSVRCLITLIFVPLFINIL), 151–171 (FLSFLSLSVVFLLLKPQIIIL), and 226–246 (FMSLFVATFPVFLDTVFKYWI).

This sequence belongs to the CemA family.

It localises to the plastid. The protein resides in the chloroplast inner membrane. The catalysed reaction is K(+)(in) + H(+)(out) = K(+)(out) + H(+)(in). Contributes to K(+)/H(+) antiport activity by supporting proton efflux to control proton extrusion and homeostasis in chloroplasts in a light-dependent manner to modulate photosynthesis. Prevents excessive induction of non-photochemical quenching (NPQ) under continuous-light conditions. Indirectly promotes efficient inorganic carbon uptake into chloroplasts. This chain is Potassium/proton antiporter CemA, found in Chlorella vulgaris (Green alga).